The sequence spans 87 residues: NADH dehydrogenase [ubiquinone] 1 alpha subcomplex subunit 4-like 2 (87 aa).

It belongs to the complex I NDUFA4 subunit family.

The sequence is that of NADH dehydrogenase [ubiquinone] 1 alpha subcomplex subunit 4-like 2 (NDUFA4L2) from Homo sapiens (Human).